Consider the following 256-residue polypeptide: 2,3,4,5-tetrahydropyridine-2,6-dicarboxylate N-acetyltransferase (256 aa).

The protein belongs to the transferase hexapeptide repeat family. DapH subfamily.

The catalysed reaction is (S)-2,3,4,5-tetrahydrodipicolinate + acetyl-CoA + H2O = L-2-acetamido-6-oxoheptanedioate + CoA. The protein operates within amino-acid biosynthesis; L-lysine biosynthesis via DAP pathway; LL-2,6-diaminopimelate from (S)-tetrahydrodipicolinate (acetylase route): step 1/3. Its function is as follows. Catalyzes the transfer of an acetyl group from acetyl-CoA to tetrahydrodipicolinate. The chain is 2,3,4,5-tetrahydropyridine-2,6-dicarboxylate N-acetyltransferase from Lactococcus lactis subsp. lactis (strain IL1403) (Streptococcus lactis).